The sequence spans 224 residues: LOB domain-containing protein 15 (224 aa).

One can recognise an LOB domain in the interval T44–I145. Residues S171 to G224 form a disordered region. The span at A178–P198 shows a compositional bias: pro residues.

This sequence belongs to the LOB domain-containing protein family. As to expression, expressed in young shoots, roots, stems, leaves and flowers.

This chain is LOB domain-containing protein 15 (LBD15), found in Arabidopsis thaliana (Mouse-ear cress).